The sequence spans 324 residues: Probable pectinesterase A (324 aa).

A signal peptide spans 1-19 (MHLPSLVLGLLGLGLTASA). The N-linked (GlcNAc...) asparagine glycan is linked to N27. Position 142 (Q142) interacts with substrate. The active-site Proton donor is the D165. The active-site Nucleophile is the D186. The N-linked (GlcNAc...) asparagine glycan is linked to N191. Positions 246 and 248 each coordinate substrate.

It belongs to the pectinesterase family.

It localises to the secreted. The enzyme catalyses [(1-&gt;4)-alpha-D-galacturonosyl methyl ester](n) + n H2O = [(1-&gt;4)-alpha-D-galacturonosyl](n) + n methanol + n H(+). Its pathway is glycan metabolism; pectin degradation; 2-dehydro-3-deoxy-D-gluconate from pectin: step 1/5. Involved in maceration and soft-rotting of plant tissue. The chain is Probable pectinesterase A (pmeA) from Neosartorya fischeri (strain ATCC 1020 / DSM 3700 / CBS 544.65 / FGSC A1164 / JCM 1740 / NRRL 181 / WB 181) (Aspergillus fischerianus).